Here is a 407-residue protein sequence, read N- to C-terminus: BMP-like protein unc-129 (407 aa).

Positions 1–18 (MRRLPIVLLLSVFSIANC) are cleaved as a signal peptide. Asn-27, Asn-42, and Asn-211 each carry an N-linked (GlcNAc...) asparagine glycan. The disordered stretch occupies residues 252-283 (DDREPIKRKNGKKNSLSEEISSEDVWQGFGEE). The N-linked (GlcNAc...) asparagine glycan is linked to Asn-395.

This sequence belongs to the TGF-beta family. Interacts with netrin receptor unc-5; the interaction is direct.

Its subcellular location is the secreted. The protein resides in the extracellular space. In terms of biological role, required for the migration of axonal growth-cones and distal tip cells (DTC) along the dorsal-ventral axis of the body wall. Acts cell nonautonomously and independently of the classical daf-4, sma-6 or daf-1 TGFbeta receptor signaling. During axon migration, facilitates long-range repulsive guidance of unc-6/netrin by enhancing unc-5-unc-40 signaling at the expense of unc-5 alone signaling, probably through direct interaction with receptor unc-5. Involved in cell-cell contact formation in sensory rays in the developing male tail, via a pathway involving plx-2 and mab-20/semaphorin-2A. This is BMP-like protein unc-129 from Caenorhabditis elegans.